The chain runs to 176 residues: DNA repair RAD52-like protein 1, mitochondrial (176 aa).

A mitochondrion-targeting transit peptide spans 1–37; sequence MAGLGLRLKAAKWTLRSGSGAVSREWSSEMGKGVRRF.

Belongs to the RAD52 family. Interacts with WHY2. As to expression, expressed in root vascular tissue, tips of primary and secondary roots, young leaves, hydathodes, stomatal guard cells, cauline leaves, flower buds, stipules, carpels, pistils and anther filaments.

It is found in the mitochondrion. The protein resides in the nucleus. In terms of biological role, plant-specific single-stranded DNA-binding protein required for efficient heterologous recombination-dependent DNA repair in nuclear and mitochondrial compartments. Forms large nucleo-protein complexes with WHY2 in mitochondria. Binds ssDNA with high affinity, but with little sequence specificity. Involved in double-stranded DNA break repair. Involved in the hydrolytic splicing pathway in mitochondrion. Facilitates the excision of two cis-spliced group II introns, NAD1 intron 2 and NAD2 intron 1. The sequence is that of DNA repair RAD52-like protein 1, mitochondrial from Arabidopsis thaliana (Mouse-ear cress).